Reading from the N-terminus, the 445-residue chain is Tryptamine benzoyltransferase 1 (445 aa).

Catalysis depends on proton acceptor residues H150 and D382.

The protein belongs to the plant acyltransferase family.

Its function is as follows. Hydroxycinnamoyl transferase that catalyzes the transfer of an acyl from benzoyl-CoA to tryptamine, to produce benzoyl tryptamine. Serotonin and tyramine serve as acyl acceptors in vitro. Can use p-coumaroyl-CoA, and to a lesser extent caffeoyl-CoA, as acyl donors. This is Tryptamine benzoyltransferase 1 from Oryza sativa subsp. japonica (Rice).